A 315-amino-acid chain; its full sequence is tRNA-cytidine(32) 2-sulfurtransferase (315 aa).

The PP-loop motif motif lies at 39-44; it reads SGGKDS. [4Fe-4S] cluster is bound by residues Cys114, Cys117, and Cys205.

It belongs to the TtcA family. In terms of assembly, homodimer. Mg(2+) is required as a cofactor. The cofactor is [4Fe-4S] cluster.

The protein resides in the cytoplasm. The enzyme catalyses cytidine(32) in tRNA + S-sulfanyl-L-cysteinyl-[cysteine desulfurase] + AH2 + ATP = 2-thiocytidine(32) in tRNA + L-cysteinyl-[cysteine desulfurase] + A + AMP + diphosphate + H(+). The protein operates within tRNA modification. In terms of biological role, catalyzes the ATP-dependent 2-thiolation of cytidine in position 32 of tRNA, to form 2-thiocytidine (s(2)C32). The sulfur atoms are provided by the cysteine/cysteine desulfurase (IscS) system. The polypeptide is tRNA-cytidine(32) 2-sulfurtransferase (Ralstonia pickettii (strain 12J)).